Consider the following 396-residue polypeptide: Ribosomal RNA large subunit methyltransferase I (396 aa).

In terms of domain architecture, PUA spans 2-79; sequence AVRIKLKPGR…REEEIDREFF (78 aa).

This sequence belongs to the methyltransferase superfamily. RlmI family.

It is found in the cytoplasm. The catalysed reaction is cytidine(1962) in 23S rRNA + S-adenosyl-L-methionine = 5-methylcytidine(1962) in 23S rRNA + S-adenosyl-L-homocysteine + H(+). In terms of biological role, specifically methylates the cytosine at position 1962 (m5C1962) of 23S rRNA. This is Ribosomal RNA large subunit methyltransferase I from Shewanella sp. (strain MR-4).